Consider the following 104-residue polypeptide: PTS system lactose-specific EIIA component (104 aa).

The PTS EIIA type-3 domain maps to Glu-4–Arg-102. His-78 (tele-phosphohistidine intermediate) is an active-site residue. Residue His-78 is modified to Phosphohistidine; by HPr. Mg(2+) is bound at residue Asp-81.

Homotrimer. Mg(2+) is required as a cofactor.

The protein resides in the cytoplasm. In terms of biological role, the phosphoenolpyruvate-dependent sugar phosphotransferase system (sugar PTS), a major carbohydrate active transport system, catalyzes the phosphorylation of incoming sugar substrates concomitantly with their translocation across the cell membrane. The enzyme II LacEF PTS system is involved in lactose transport. The protein is PTS system lactose-specific EIIA component of Streptococcus mutans serotype c (strain ATCC 700610 / UA159).